Reading from the N-terminus, the 427-residue chain is Adenylosuccinate synthetase (427 aa).

GTP-binding positions include 12-18 and 40-42; these read GDEGKGK and GHT. Asp-13 (proton acceptor) is an active-site residue. Residues Asp-13 and Gly-40 each coordinate Mg(2+). IMP is bound by residues 13 to 16, 38 to 41, Thr-128, Arg-142, Gln-223, Thr-238, and Arg-302; these read DEGK and NAGH. His-41 (proton donor) is an active-site residue. Residue 298 to 304 participates in substrate binding; it reads VTTGRDR. GTP contacts are provided by residues Arg-304, 330–332, and 412–414; these read KLD and GVG.

The protein belongs to the adenylosuccinate synthetase family. As to quaternary structure, homodimer. The cofactor is Mg(2+).

The protein resides in the cytoplasm. It catalyses the reaction IMP + L-aspartate + GTP = N(6)-(1,2-dicarboxyethyl)-AMP + GDP + phosphate + 2 H(+). It functions in the pathway purine metabolism; AMP biosynthesis via de novo pathway; AMP from IMP: step 1/2. Plays an important role in the de novo pathway of purine nucleotide biosynthesis. Catalyzes the first committed step in the biosynthesis of AMP from IMP. This Streptomyces coelicolor (strain ATCC BAA-471 / A3(2) / M145) protein is Adenylosuccinate synthetase.